A 226-amino-acid polypeptide reads, in one-letter code: Oxaloacetate tautomerase FAHD2, mitochondrial (226 aa).

The N-terminal 30 residues, 1–30 (MAAAAQRLLAASTKIVGVGRNFVAHAKELG), are a transit peptide targeting the mitochondrion. Mg(2+) is bound by residues glutamate 69, glutamate 71, and aspartate 100.

The protein belongs to the FAH family. The cofactor is Mg(2+). It depends on Mn(2+) as a cofactor.

It localises to the mitochondrion. It catalyses the reaction oxaloacetate = enol-oxaloacetate. In terms of biological role, tautomerase that converts enol-oxaloacetate, a strong inhibitor of succinate dehydrogenase, to the physiological keto form of oxaloacetate. This chain is Oxaloacetate tautomerase FAHD2, mitochondrial, found in Oryza sativa subsp. japonica (Rice).